The sequence spans 395 residues: NAD(P)H-quinone oxidoreductase subunit H, chloroplastic (395 aa).

The protein belongs to the complex I 49 kDa subunit family. In terms of assembly, NDH is composed of at least 16 different subunits, 5 of which are encoded in the nucleus.

The protein localises to the plastid. The protein resides in the chloroplast thylakoid membrane. It carries out the reaction a plastoquinone + NADH + (n+1) H(+)(in) = a plastoquinol + NAD(+) + n H(+)(out). The catalysed reaction is a plastoquinone + NADPH + (n+1) H(+)(in) = a plastoquinol + NADP(+) + n H(+)(out). In terms of biological role, NDH shuttles electrons from NAD(P)H:plastoquinone, via FMN and iron-sulfur (Fe-S) centers, to quinones in the photosynthetic chain and possibly in a chloroplast respiratory chain. The immediate electron acceptor for the enzyme in this species is believed to be plastoquinone. Couples the redox reaction to proton translocation, and thus conserves the redox energy in a proton gradient. The polypeptide is NAD(P)H-quinone oxidoreductase subunit H, chloroplastic (Dioscorea elephantipes (Elephant's foot yam)).